A 470-amino-acid chain; its full sequence is tRNA(Ile)-lysidine synthase (470 aa).

32 to 37 (SGGVDS) provides a ligand contact to ATP.

The protein belongs to the tRNA(Ile)-lysidine synthase family.

The protein localises to the cytoplasm. The catalysed reaction is cytidine(34) in tRNA(Ile2) + L-lysine + ATP = lysidine(34) in tRNA(Ile2) + AMP + diphosphate + H(+). In terms of biological role, ligates lysine onto the cytidine present at position 34 of the AUA codon-specific tRNA(Ile) that contains the anticodon CAU, in an ATP-dependent manner. Cytidine is converted to lysidine, thus changing the amino acid specificity of the tRNA from methionine to isoleucine. In Shewanella woodyi (strain ATCC 51908 / MS32), this protein is tRNA(Ile)-lysidine synthase.